The chain runs to 500 residues: UDP-N-acetylmuramoyl-L-alanyl-D-glutamate--2,6-diaminopimelate ligase (500 aa).

Ser-32 contributes to the UDP-N-acetyl-alpha-D-muramoyl-L-alanyl-D-glutamate binding site. 117–123 (GTNGKTT) serves as a coordination point for ATP. UDP-N-acetyl-alpha-D-muramoyl-L-alanyl-D-glutamate is bound by residues 159–160 (TT), Ser-186, Gln-192, and Arg-194. At Lys-226 the chain carries N6-carboxylysine. Residues Arg-395, 419–422 (DNPR), Gly-470, and Glu-474 contribute to the meso-2,6-diaminopimelate site. The short motif at 419–422 (DNPR) is the Meso-diaminopimelate recognition motif element.

The protein belongs to the MurCDEF family. MurE subfamily. Mg(2+) is required as a cofactor. Post-translationally, carboxylation is probably crucial for Mg(2+) binding and, consequently, for the gamma-phosphate positioning of ATP.

It localises to the cytoplasm. It catalyses the reaction UDP-N-acetyl-alpha-D-muramoyl-L-alanyl-D-glutamate + meso-2,6-diaminopimelate + ATP = UDP-N-acetyl-alpha-D-muramoyl-L-alanyl-gamma-D-glutamyl-meso-2,6-diaminopimelate + ADP + phosphate + H(+). The protein operates within cell wall biogenesis; peptidoglycan biosynthesis. Functionally, catalyzes the addition of meso-diaminopimelic acid to the nucleotide precursor UDP-N-acetylmuramoyl-L-alanyl-D-glutamate (UMAG) in the biosynthesis of bacterial cell-wall peptidoglycan. The sequence is that of UDP-N-acetylmuramoyl-L-alanyl-D-glutamate--2,6-diaminopimelate ligase from Parasynechococcus marenigrum (strain WH8102).